A 381-amino-acid chain; its full sequence is Alkanesulfonate monooxygenase (381 aa).

It belongs to the SsuD family. Homotetramer.

The catalysed reaction is an alkanesulfonate + FMNH2 + O2 = an aldehyde + FMN + sulfite + H2O + 2 H(+). In terms of biological role, catalyzes the desulfonation of aliphatic sulfonates. The polypeptide is Alkanesulfonate monooxygenase (Escherichia coli O17:K52:H18 (strain UMN026 / ExPEC)).